The primary structure comprises 651 residues: MBT domain-containing protein 1 (651 aa).

The interval 21-55 (SFGMFDGYDSCSEDTSSSSSSDESEEEVAPLPSSL) is disordered. Residues 29–41 (DSCSEDTSSSSSS) are compositionally biased toward low complexity. Residues 68–103 (PDGKSGMATCEMCGMVGVRDAFYSKTKRFCSVSCSR) form an FCS-type zinc finger. Zn(2+)-binding residues include C77, C80, C97, and C101. MBT repeat units follow at residues 164 to 268 (FSWG…LVPP), 276 to 373 (TNWK…IGHR), 374 to 479 (FKRT…LTPP), and 487 to 583 (FKWF…LQPP). 2 disordered regions span residues 581-610 (QPPA…YKGH) and 629-651 (TFLQ…KQEP). Over residues 586-596 (QSNKDSQSNIS) the composition is skewed to low complexity. The span at 597-610 (KQKKKSKSQPYKGH) shows a compositional bias: basic residues. The segment covering 632–643 (QGASDQESNGSG) has biased composition (polar residues).

As to quaternary structure, monomer. Component of the NuA4 histone acetyltransferase complex.

The protein resides in the nucleus. Its subcellular location is the chromosome. Functionally, chromatin reader component of the NuA4 histone acetyltransferase complex, a multiprotein complex involved in transcriptional activation of select genes principally by acetylation of nucleosomal histones H4 and H2A. The NuA4 complex plays a direct role in repair of DNA double-strand breaks (DSBs) by promoting homologous recombination (HR). MBTD1 specifically recognizes and binds monomethylated and dimethylated 'Lys-20' on histone H4 (H4K20me1 and H4K20me2, respectively). In the NuA4 complex, MBTD1 promotes recruitment of the complex to H4K20me marks by competing with TP53BP1 for binding to H4K20me. Following recruitment to H4K20me at DNA breaks, the NuA4 complex catalyzes acetylation of 'Lys-15' on histone H2A (H2AK15), blocking the ubiquitination mark required for TP53BP1 localization at DNA breaks, thereby promoting homologous recombination (HR). The polypeptide is MBT domain-containing protein 1 (Xenopus tropicalis (Western clawed frog)).